Here is a 475-residue protein sequence, read N- to C-terminus: Glycogen synthase (475 aa).

Lys15 contacts ADP-alpha-D-glucose.

The protein belongs to the glycosyltransferase 1 family. Bacterial/plant glycogen synthase subfamily.

The enzyme catalyses [(1-&gt;4)-alpha-D-glucosyl](n) + ADP-alpha-D-glucose = [(1-&gt;4)-alpha-D-glucosyl](n+1) + ADP + H(+). It functions in the pathway glycan biosynthesis; glycogen biosynthesis. Synthesizes alpha-1,4-glucan chains using ADP-glucose. This Chlamydia caviae (strain ATCC VR-813 / DSM 19441 / 03DC25 / GPIC) (Chlamydophila caviae) protein is Glycogen synthase.